The primary structure comprises 343 residues: Probable dual-specificity RNA methyltransferase RlmN (343 aa).

E92 (proton acceptor) is an active-site residue. A Radical SAM core domain is found at 98–328; that stretch reads YHHGLTACIS…TTVRREMGAD (231 aa). C105 and C333 are joined by a disulfide. C112, C116, and C119 together coordinate [4Fe-4S] cluster. Residues 159-160, S191, 214-216, and N290 each bind S-adenosyl-L-methionine; these read GE and SLH. C333 acts as the S-methylcysteine intermediate in catalysis.

Belongs to the radical SAM superfamily. RlmN family. Requires [4Fe-4S] cluster as cofactor.

The protein localises to the cytoplasm. It catalyses the reaction adenosine(2503) in 23S rRNA + 2 reduced [2Fe-2S]-[ferredoxin] + 2 S-adenosyl-L-methionine = 2-methyladenosine(2503) in 23S rRNA + 5'-deoxyadenosine + L-methionine + 2 oxidized [2Fe-2S]-[ferredoxin] + S-adenosyl-L-homocysteine. It carries out the reaction adenosine(37) in tRNA + 2 reduced [2Fe-2S]-[ferredoxin] + 2 S-adenosyl-L-methionine = 2-methyladenosine(37) in tRNA + 5'-deoxyadenosine + L-methionine + 2 oxidized [2Fe-2S]-[ferredoxin] + S-adenosyl-L-homocysteine. In terms of biological role, specifically methylates position 2 of adenine 2503 in 23S rRNA and position 2 of adenine 37 in tRNAs. The chain is Probable dual-specificity RNA methyltransferase RlmN from Alkaliphilus oremlandii (strain OhILAs) (Clostridium oremlandii (strain OhILAs)).